The sequence spans 504 residues: D-alanine--D-alanyl carrier protein ligase (504 aa).

T152–S153 lines the ATP pocket. D-alanine is bound at residue D197. N292 to T297 contributes to the ATP binding site. V301 contacts D-alanine. ATP contacts are provided by residues D383, Y394–R397, and K492. A D-alanine-binding site is contributed by K492.

The protein belongs to the ATP-dependent AMP-binding enzyme family. DltA subfamily.

It is found in the cytoplasm. The catalysed reaction is holo-[D-alanyl-carrier protein] + D-alanine + ATP = D-alanyl-[D-alanyl-carrier protein] + AMP + diphosphate. Its pathway is cell wall biogenesis; lipoteichoic acid biosynthesis. Functionally, catalyzes the first step in the D-alanylation of lipoteichoic acid (LTA), the activation of D-alanine and its transfer onto the D-alanyl carrier protein (Dcp) DltC. In an ATP-dependent two-step reaction, forms a high energy D-alanyl-AMP intermediate, followed by transfer of the D-alanyl residue as a thiol ester to the phosphopantheinyl prosthetic group of the Dcp. D-alanylation of LTA plays an important role in modulating the properties of the cell wall in Gram-positive bacteria, influencing the net charge of the cell wall. This is D-alanine--D-alanyl carrier protein ligase from Bacillus cereus (strain AH187).